Here is a 224-residue protein sequence, read N- to C-terminus: Transcription cofactor HES-6 (224 aa).

The interval 1-31 is disordered; sequence MAPSQAPSRDRAGQEDEDRWEARGDRKARKP. The span at 8-25 shows a compositional bias: basic and acidic residues; that stretch reads SRDRAGQEDEDRWEARGD. Residues 25–77 enclose the bHLH domain; it reads DRKARKPLVEKKRRARINESLQELRLLLAGTEVQAKLENAEVLELTVRRVQGA. The Orange domain occupies 96–129; that stretch reads FAAGYIQCMHEVHTFVSTCQAIDATVSAELLNHL. The interval 146-209 is disordered; it reads GDSLAGLPGG…GPDLVSTSLG (64 aa). Low complexity predominate over residues 158-171; the sequence is RSSWPPGGSPESPL. Residues 181 to 190 show a composition bias toward acidic residues; it reads LCSDLEEIPE. The WRPW motif motif lies at 221–224; it reads WRPW.

In terms of assembly, transcription repression requires formation of a complex with a corepressor protein of the Groucho/TLE family. Interacts with HES1. As to expression, expressed in both undifferentiated and differentiated cells. High levels of expression are observed in several embryonic tissues including the nervous system, muscle and thymus. In the nervous system, initially expressed in the closing neural tube, then in the spinal cord, cranial and dorsal root ganglia, and brain neuroepithelium. Also expressed in epithelial cells of the embryonic respiratory, urinary and digestive systems. In the limb buds, expressed in skeletal muscle and presumptive tendons.

The protein resides in the nucleus. Does not bind DNA itself but suppresses both HES1-mediated N box-dependent transcriptional repression and binding of HES1 to E box sequences. Also suppresses HES1-mediated inhibition of the heterodimer formed by ASCL1/MASH1 and TCF3/E47, allowing ASCL1 and TCF3 to up-regulate transcription in its presence. Promotes cell differentiation. This is Transcription cofactor HES-6 from Mus musculus (Mouse).